A 517-amino-acid chain; its full sequence is MFS efflux transporter inpD (517 aa).

The interval 1-24 (MEKTQTPSLTPDELSARSSTPFEE) is disordered. The next 5 helical transmembrane spans lie at 37 to 57 (LKFS…ALSL), 59 to 79 (DIGW…LVFG), 89 to 109 (IVYL…ATAP), 112 to 132 (IALI…LSGA), and 151 to 171 (ILGA…GGII). N-linked (GlcNAc...) asparagine glycosylation is present at Asn-172. The next 9 membrane-spanning stretches (helical) occupy residues 178 to 198 (WIFY…VFLL), 219 to 239 (LPAF…LLWG), 247 to 267 (NARI…FMLV), 292 to 312 (FFSF…PIWL), 328 to 348 (LPII…TPVI), 352 to 372 (VPFM…LSTL), 381 to 401 (VLGF…QTLV), 412 to 432 (IPIG…IALS), and 485 to 505 (AIVK…IGVL).

Belongs to the major facilitator superfamily.

The protein resides in the cell membrane. MFS efflux transporter; part of the inp gene cluster that mediates the biosynthesis of fellutamide B, a mycotoxin that acts as a proteasome inhibitor. In the first step of fellutabmide B biosynthesis inpC activates 3-hydroxydodecanoic acid to generate 3-hydroxydodecanoyl-AMP that is then loaded onto the T0 domain of inpB. The 3-hydroxydodecanoyl-S-phosphopantetheinyl-T0 is sequentially extended with L-Asn and L-Gln by the two CAT modules of inpB. The linear lipodipeptide from inpB is then transferred onto inpA for the addition of the third amino acid, L-Leu. Reductive releasing of the lipotripeptide by the TE domain of inpA produces (2S)-fellutamide B. InpF might be involved in the release and transfer of the lipodipeptide from inpB to inpA. The inp cluster-encoded proteasome subunit inpE confers resistance to internally produced fellutamides. The MFS efflux transporter inpD may contribute to fellutamide resistance as well. This Emericella nidulans (strain FGSC A4 / ATCC 38163 / CBS 112.46 / NRRL 194 / M139) (Aspergillus nidulans) protein is MFS efflux transporter inpD.